The following is a 231-amino-acid chain: Probable pseudouridine-5'-phosphatase (231 aa).

Residue D15 is the Nucleophile of the active site. Mg(2+) is bound by residues D15 and D17. Residue D17 is the Proton donor of the active site.

It belongs to the HAD-like hydrolase superfamily. CbbY/CbbZ/Gph/YieH family. Mg(2+) is required as a cofactor.

It carries out the reaction psi-UMP + H2O = pseudouridine + phosphate. Functionally, dephosphorylates pseudouridine 5'-phosphate, a potential intermediate in rRNA degradation. The chain is Probable pseudouridine-5'-phosphatase (Gs1l) from Drosophila melanogaster (Fruit fly).